We begin with the raw amino-acid sequence, 360 residues long: Phospho-N-acetylmuramoyl-pentapeptide-transferase (360 aa).

Helical transmembrane passes span Ala26–Arg46, Gly70–Trp90, Phe97–Tyr117, Phe134–Ala154, Val168–Ser188, Gly199–Ser219, Val236–Phe256, Val263–Val283, Ile288–Val308, and Val338–Lys358.

Belongs to the glycosyltransferase 4 family. MraY subfamily. Requires Mg(2+) as cofactor.

Its subcellular location is the cell inner membrane. It catalyses the reaction UDP-N-acetyl-alpha-D-muramoyl-L-alanyl-gamma-D-glutamyl-meso-2,6-diaminopimeloyl-D-alanyl-D-alanine + di-trans,octa-cis-undecaprenyl phosphate = di-trans,octa-cis-undecaprenyl diphospho-N-acetyl-alpha-D-muramoyl-L-alanyl-D-glutamyl-meso-2,6-diaminopimeloyl-D-alanyl-D-alanine + UMP. Its pathway is cell wall biogenesis; peptidoglycan biosynthesis. Functionally, catalyzes the initial step of the lipid cycle reactions in the biosynthesis of the cell wall peptidoglycan: transfers peptidoglycan precursor phospho-MurNAc-pentapeptide from UDP-MurNAc-pentapeptide onto the lipid carrier undecaprenyl phosphate, yielding undecaprenyl-pyrophosphoryl-MurNAc-pentapeptide, known as lipid I. This Thioalkalivibrio sulfidiphilus (strain HL-EbGR7) protein is Phospho-N-acetylmuramoyl-pentapeptide-transferase.